The following is an 89-amino-acid chain: MALSQERKREIIEQFKIHENDTGSPEVQIAILTEQINNLNEHLRVHKKDHHSRRGLLKMVGKRRNLLTYLRNKDIARYRELINKLGLRR.

The protein belongs to the universal ribosomal protein uS15 family. As to quaternary structure, part of the 30S ribosomal subunit. Forms a bridge to the 50S subunit in the 70S ribosome, contacting the 23S rRNA.

Its function is as follows. One of the primary rRNA binding proteins, it binds directly to 16S rRNA where it helps nucleate assembly of the platform of the 30S subunit by binding and bridging several RNA helices of the 16S rRNA. Functionally, forms an intersubunit bridge (bridge B4) with the 23S rRNA of the 50S subunit in the ribosome. In Geobacillus sp. (strain WCH70), this protein is Small ribosomal subunit protein uS15.